A 79-amino-acid chain; its full sequence is Large ribosomal subunit protein uL22 (79 aa).

This sequence belongs to the universal ribosomal protein uL22 family. Part of the 50S ribosomal subunit.

Functionally, this protein binds specifically to 23S rRNA; its binding is stimulated by other ribosomal proteins, e.g. L4, L17, and L20. It is important during the early stages of 50S assembly. It makes multiple contacts with different domains of the 23S rRNA in the assembled 50S subunit and ribosome. Its function is as follows. The globular domain of the protein is located near the polypeptide exit tunnel on the outside of the subunit, while an extended beta-hairpin is found that lines the wall of the exit tunnel in the center of the 70S ribosome. The sequence is that of Large ribosomal subunit protein uL22 (rplV) from Clover proliferation phytoplasma.